Reading from the N-terminus, the 100-residue chain is uncharacterized protein (100 aa).

This is an uncharacterized protein from Bacillus subtilis (strain 168).